A 364-amino-acid chain; its full sequence is Nucleosome assembly protein 1;2 (364 aa).

The stretch at 32-86 (VESIKNTLQGLAARHTDVLESLEPKVRKRVEVLREIQSQHDDLEAKFFEERAALE) forms a coiled coil. Residues 53–68 (LEPKVRKRVEVLREIQ) carry the Nuclear export signal motif. A Nuclear localization signal motif is present at residues 227–232 (KKKPKK). Disordered stretches follow at residues 250 to 269 (FNFFSPPQVPDDDEEIDEDT) and 301 to 364 (GEAA…CKQQ). Composition is skewed to acidic residues over residues 259–269 (PDDDEEIDEDT) and 304–340 (AQDEDFEGIMDDEDDDDEDDDDDEDEDDEDDDEDDED). Cysteine methyl ester is present on Cys361. Residue Cys361 is the site of S-farnesyl cysteine attachment. A propeptide spans 362–364 (KQQ) (removed in mature form).

It belongs to the nucleosome assembly protein (NAP) family. In terms of assembly, binds preferentially histone H1 in vitro. In terms of tissue distribution, highly expressed in tissues exhibiting active cell-division activities, such as root and shoot meristems and young flowers.

It is found in the nucleus. It localises to the cytoplasm. In terms of biological role, may modulate chromatin structure by regulation of nucleosome assembly/disassembly. The chain is Nucleosome assembly protein 1;2 (NAP1;2) from Oryza sativa subsp. indica (Rice).